Reading from the N-terminus, the 126-residue chain is Phosphoribosyl-AMP cyclohydrolase (126 aa).

Residue D76 participates in Mg(2+) binding. Position 77 (C77) interacts with Zn(2+). Mg(2+) is bound by residues D78 and D80. Residues C94 and C101 each coordinate Zn(2+).

The protein belongs to the PRA-CH family. As to quaternary structure, homodimer. The cofactor is Mg(2+). Zn(2+) is required as a cofactor.

It localises to the cytoplasm. It catalyses the reaction 1-(5-phospho-beta-D-ribosyl)-5'-AMP + H2O = 1-(5-phospho-beta-D-ribosyl)-5-[(5-phospho-beta-D-ribosylamino)methylideneamino]imidazole-4-carboxamide. Its pathway is amino-acid biosynthesis; L-histidine biosynthesis; L-histidine from 5-phospho-alpha-D-ribose 1-diphosphate: step 3/9. Functionally, catalyzes the hydrolysis of the adenine ring of phosphoribosyl-AMP. The chain is Phosphoribosyl-AMP cyclohydrolase from Ruthia magnifica subsp. Calyptogena magnifica.